The chain runs to 206 residues: MSKGSSTKKWLHEHTSDYYVIQANKLGYRSRASFKILEIQNKYQLFKPNMFVVDLGAAPGGWSEQVIKYIGKNGKLIALDLLEMAPIAGVEFIQGDFSSDETYQKLNTLVNNQKIDCVISDMAPNLSGNKTSDQAKSIYLLELALDFANTNLNKNGSFVAKVFQGQGSDEYLKLVRESFNKVIQFKPKSSRAKSREFYVIATEFKG.

S-adenosyl-L-methionine is bound by residues glycine 60, tryptophan 62, aspartate 80, aspartate 96, and aspartate 121. Lysine 161 acts as the Proton acceptor in catalysis.

It belongs to the class I-like SAM-binding methyltransferase superfamily. RNA methyltransferase RlmE family.

Its subcellular location is the cytoplasm. The catalysed reaction is uridine(2552) in 23S rRNA + S-adenosyl-L-methionine = 2'-O-methyluridine(2552) in 23S rRNA + S-adenosyl-L-homocysteine + H(+). Functionally, specifically methylates the uridine in position 2552 of 23S rRNA at the 2'-O position of the ribose in the fully assembled 50S ribosomal subunit. The chain is Ribosomal RNA large subunit methyltransferase E from Francisella tularensis subsp. novicida (strain U112).